A 145-amino-acid chain; its full sequence is 3-dehydroquinate dehydratase (145 aa).

The active-site Proton acceptor is the Tyr-22. Substrate contacts are provided by Asn-74, His-80, and Asp-87. His-100 (proton donor) is an active-site residue. Substrate contacts are provided by residues Ile-101–Ser-102 and Arg-111.

It belongs to the type-II 3-dehydroquinase family. In terms of assembly, homododecamer.

The catalysed reaction is 3-dehydroquinate = 3-dehydroshikimate + H2O. Its pathway is metabolic intermediate biosynthesis; chorismate biosynthesis; chorismate from D-erythrose 4-phosphate and phosphoenolpyruvate: step 3/7. Catalyzes a trans-dehydration via an enolate intermediate. This chain is 3-dehydroquinate dehydratase, found in Lachnoclostridium phytofermentans (strain ATCC 700394 / DSM 18823 / ISDg) (Clostridium phytofermentans).